We begin with the raw amino-acid sequence, 123 residues long: Large ribosomal subunit protein bL12 (123 aa).

Belongs to the bacterial ribosomal protein bL12 family. Homodimer. Part of the ribosomal stalk of the 50S ribosomal subunit. Forms a multimeric L10(L12)X complex, where L10 forms an elongated spine to which 2 to 4 L12 dimers bind in a sequential fashion. Binds GTP-bound translation factors.

In terms of biological role, forms part of the ribosomal stalk which helps the ribosome interact with GTP-bound translation factors. Is thus essential for accurate translation. The chain is Large ribosomal subunit protein bL12 from Desulfotalea psychrophila (strain LSv54 / DSM 12343).